Consider the following 283-residue polypeptide: Phosphatidylglycerol--prolipoprotein diacylglyceryl transferase (283 aa).

The next 4 helical transmembrane spans lie at 17 to 37, 56 to 76, 92 to 112, and 117 to 137; these read LAVR…TFLG, FLTW…VLFY, WEGG…IWLF, and GIGF…GLAS. Arg-139 contributes to the a 1,2-diacyl-sn-glycero-3-phospho-(1'-sn-glycerol) binding site. A run of 3 helical transmembrane segments spans residues 194 to 214, 222 to 242, and 255 to 275; these read PSQL…VWLF, GQVA…AEFA, and GLSM…VGFV.

The protein belongs to the Lgt family.

Its subcellular location is the cell inner membrane. The catalysed reaction is L-cysteinyl-[prolipoprotein] + a 1,2-diacyl-sn-glycero-3-phospho-(1'-sn-glycerol) = an S-1,2-diacyl-sn-glyceryl-L-cysteinyl-[prolipoprotein] + sn-glycerol 1-phosphate + H(+). It functions in the pathway protein modification; lipoprotein biosynthesis (diacylglyceryl transfer). Catalyzes the transfer of the diacylglyceryl group from phosphatidylglycerol to the sulfhydryl group of the N-terminal cysteine of a prolipoprotein, the first step in the formation of mature lipoproteins. The chain is Phosphatidylglycerol--prolipoprotein diacylglyceryl transferase from Neisseria meningitidis serogroup C (strain 053442).